A 680-amino-acid polypeptide reads, in one-letter code: DNA ligase (680 aa).

Residues 32–36, 81–82, and Glu-115 contribute to the NAD(+) site; these read DAVYD and SL. Lys-117 (N6-AMP-lysine intermediate) is an active-site residue. Residues Arg-138, Glu-175, Lys-291, and Lys-315 each coordinate NAD(+). Zn(2+) is bound by residues Cys-409, Cys-412, Cys-427, and Cys-432. The BRCT domain maps to 600–680; sequence ASEQHLKGLT…RLQAMLKDSP (81 aa).

This sequence belongs to the NAD-dependent DNA ligase family. LigA subfamily. The cofactor is Mg(2+). It depends on Mn(2+) as a cofactor.

The enzyme catalyses NAD(+) + (deoxyribonucleotide)n-3'-hydroxyl + 5'-phospho-(deoxyribonucleotide)m = (deoxyribonucleotide)n+m + AMP + beta-nicotinamide D-nucleotide.. Functionally, DNA ligase that catalyzes the formation of phosphodiester linkages between 5'-phosphoryl and 3'-hydroxyl groups in double-stranded DNA using NAD as a coenzyme and as the energy source for the reaction. It is essential for DNA replication and repair of damaged DNA. This Synechococcus sp. (strain CC9902) protein is DNA ligase.